A 368-amino-acid polypeptide reads, in one-letter code: tRNA/tmRNA (uracil-C(5))-methyltransferase (368 aa).

Residues Q190, Y218, N223, E239, and D301 each contribute to the S-adenosyl-L-methionine site. C326 acts as the Nucleophile in catalysis. Residue E360 is the Proton acceptor of the active site.

This sequence belongs to the class I-like SAM-binding methyltransferase superfamily. RNA M5U methyltransferase family. TrmA subfamily.

The catalysed reaction is uridine(54) in tRNA + S-adenosyl-L-methionine = 5-methyluridine(54) in tRNA + S-adenosyl-L-homocysteine + H(+). The enzyme catalyses uridine(341) in tmRNA + S-adenosyl-L-methionine = 5-methyluridine(341) in tmRNA + S-adenosyl-L-homocysteine + H(+). Dual-specificity methyltransferase that catalyzes the formation of 5-methyluridine at position 54 (m5U54) in all tRNAs, and that of position 341 (m5U341) in tmRNA (transfer-mRNA). This Aliivibrio salmonicida (strain LFI1238) (Vibrio salmonicida (strain LFI1238)) protein is tRNA/tmRNA (uracil-C(5))-methyltransferase.